We begin with the raw amino-acid sequence, 218 residues long: Small ribosomal subunit protein uS3c (218 aa).

The KH type-2 domain occupies 47–118 (VQKQIKNSSN…KIQITLKNVL (72 aa)).

This sequence belongs to the universal ribosomal protein uS3 family. Part of the 30S ribosomal subunit.

It localises to the plastid. The protein localises to the chloroplast. This chain is Small ribosomal subunit protein uS3c (rps3), found in Angiopteris evecta (Mule's foot fern).